Here is a 354-residue protein sequence, read N- to C-terminus: Divinyl chlorophyll a/b light-harvesting protein PcbG (354 aa).

6 helical membrane-spanning segments follow: residues 27-47 (FIAAHAGHTGLISFAAGASTL), 65-85 (IFLAHLASIGIGFDDAGVWTG), 88-108 (VASVAIVHIIASLVYAGGALS), 201-221 (VLGGHAFLAFVEITGGAFHIA), 241-261 (AVLSFSLAGIGWMAIVAAFWC), and 308-328 (LTNVHYYFGFFFLQGHLWHAI).

Belongs to the PsbB/PsbC family. IsiA/Pcb subfamily. As to quaternary structure, the antenna complex consists of divinyl chlorophylls (a and b) and divinyl chlorophyll a/b binding proteins and binds more divinyl chlorophyll b than does the antenna complex from high-light-adapted Prochlorococcus. The cofactor is divinyl chlorophyll a. Requires divinyl chlorophyll b as cofactor.

The protein resides in the cellular thylakoid membrane. In terms of biological role, the antenna complex functions as a light receptor, it captures and delivers excitation energy to photosystems II and I. The Prochlorales pcb genes are not related to higher plant LHCs. The sequence is that of Divinyl chlorophyll a/b light-harvesting protein PcbG (pcbG) from Prochlorococcus marinus (strain NATL2A).